The chain runs to 556 residues: Formate--tetrahydrofolate ligase (556 aa).

Residue Thr65–Ser72 coordinates ATP.

Belongs to the formate--tetrahydrofolate ligase family.

The catalysed reaction is (6S)-5,6,7,8-tetrahydrofolate + formate + ATP = (6R)-10-formyltetrahydrofolate + ADP + phosphate. It functions in the pathway one-carbon metabolism; tetrahydrofolate interconversion. This is Formate--tetrahydrofolate ligase from Streptococcus uberis (strain ATCC BAA-854 / 0140J).